Here is a 237-residue protein sequence, read N- to C-terminus: Small ribosomal subunit protein uS3 (237 aa).

In terms of domain architecture, KH type-2 spans 39–107 (IRAYLMEELK…ETHLNIVEVR (69 aa)). The disordered stretch occupies residues 213 to 237 (MASERRATESDNQGGGGRDRRRENA).

This sequence belongs to the universal ribosomal protein uS3 family. In terms of assembly, part of the 30S ribosomal subunit. Forms a tight complex with proteins S10 and S14.

Its function is as follows. Binds the lower part of the 30S subunit head. Binds mRNA in the 70S ribosome, positioning it for translation. The sequence is that of Small ribosomal subunit protein uS3 from Sinorhizobium fredii (strain NBRC 101917 / NGR234).